Consider the following 214-residue polypeptide: ATP phosphoribosyltransferase (214 aa).

It belongs to the ATP phosphoribosyltransferase family. Short subfamily. Heteromultimer composed of HisG and HisZ subunits.

It is found in the cytoplasm. It carries out the reaction 1-(5-phospho-beta-D-ribosyl)-ATP + diphosphate = 5-phospho-alpha-D-ribose 1-diphosphate + ATP. It participates in amino-acid biosynthesis; L-histidine biosynthesis; L-histidine from 5-phospho-alpha-D-ribose 1-diphosphate: step 1/9. Its function is as follows. Catalyzes the condensation of ATP and 5-phosphoribose 1-diphosphate to form N'-(5'-phosphoribosyl)-ATP (PR-ATP). Has a crucial role in the pathway because the rate of histidine biosynthesis seems to be controlled primarily by regulation of HisG enzymatic activity. The protein is ATP phosphoribosyltransferase of Nostoc punctiforme (strain ATCC 29133 / PCC 73102).